The sequence spans 405 residues: Argininosuccinate synthase (405 aa).

Residues 10 to 18 (AYSGGLDTS) and A37 contribute to the ATP site. L-citrulline contacts are provided by Y88 and S93. G118 contacts ATP. The L-aspartate site is built by T120, N124, and D125. An L-citrulline-binding site is contributed by N124. Residues R128, S179, S188, E264, and Y276 each contribute to the L-citrulline site.

Belongs to the argininosuccinate synthase family. Type 1 subfamily. Homotetramer.

The protein resides in the cytoplasm. It catalyses the reaction L-citrulline + L-aspartate + ATP = 2-(N(omega)-L-arginino)succinate + AMP + diphosphate + H(+). It participates in amino-acid biosynthesis; L-arginine biosynthesis; L-arginine from L-ornithine and carbamoyl phosphate: step 2/3. In Ectopseudomonas mendocina (strain ymp) (Pseudomonas mendocina), this protein is Argininosuccinate synthase.